Reading from the N-terminus, the 68-residue chain is MATKASNLVVFLLSLLLLFLLISFQVGVADATRNKRQGQEQRVDYDYPRPPTAPIYLPPSKSRKGKGP.

The N-terminal stretch at 1–31 (MATKASNLVVFLLSLLLLFLLISFQVGVADA) is a signal peptide. The interval 33–68 (RNKRQGQEQRVDYDYPRPPTAPIYLPPSKSRKGKGP) is disordered. A compositionally biased stretch (basic and acidic residues) spans 37 to 47 (QGQEQRVDYDY). Positions 48–57 (PRPPTAPIYL) are enriched in pro residues. The SCOOP motif signature appears at 54–68 (PIYLPPSKSRKGKGP). Residues 60-62 (SKS) carry the SxS motif essential for MIK2 binding motif.

This sequence belongs to the serine rich endogenous peptide (SCOOP) phytocytokine family. As to quaternary structure, interacts with MIK2 (via extracellular leucine-rich repeat domain); this interaction triggers the formation of complex between MIK2 and the BAK1/SERK3 and SERK4 coreceptors, and subsequent BAK1 activation by phosphorylation. As to expression, mostly expressed in stems and flowers and, to a lower extent, in seedlings shoots, roots, siliques, seeds and leaves.

Its subcellular location is the cell membrane. The protein resides in the secreted. The protein localises to the extracellular space. It is found in the apoplast. Brassicaceae-specific phytocytokine (plant endogenous peptide released into the apoplast) perceived by MIK2 in a BAK1/SERK3 and SERK4 coreceptors-dependent manner, that modulates various physiological and antimicrobial processes including growth prevention and reactive oxygen species (ROS) response regulation. Promotes the expression of immune-related marker genes (e.g. WRKY30, WRKY33 and CYP81F2) in a MIK2-dependent manner. Inhibits root growth and regulates root meristems. Prevents general growth and development. Exhibits antibacterial effects against Pseudomonas syringae pv. tomato DC3000, Ralstonia solanacearum, Bacillus subtilis and Agrobacterium tumefaciens, thus being an antimicrobial peptide (AMP). The protein is Serine rich endogenous peptide 13 of Arabidopsis thaliana (Mouse-ear cress).